The following is a 327-amino-acid chain: tRNA(Ile)-lysidine synthase (327 aa).

S32 to S37 lines the ATP pocket.

It belongs to the tRNA(Ile)-lysidine synthase family.

The protein localises to the cytoplasm. The catalysed reaction is cytidine(34) in tRNA(Ile2) + L-lysine + ATP = lysidine(34) in tRNA(Ile2) + AMP + diphosphate + H(+). Functionally, ligates lysine onto the cytidine present at position 34 of the AUA codon-specific tRNA(Ile) that contains the anticodon CAU, in an ATP-dependent manner. Cytidine is converted to lysidine, thus changing the amino acid specificity of the tRNA from methionine to isoleucine. This chain is tRNA(Ile)-lysidine synthase, found in Synechococcus sp. (strain JA-2-3B'a(2-13)) (Cyanobacteria bacterium Yellowstone B-Prime).